A 379-amino-acid chain; its full sequence is Carboxypeptidase Y-deficient protein 8 (379 aa).

Low complexity predominate over residues 84–107 (HGSGNSSSKKVTSSTSSSSSNGSV). Residues 84 to 108 (HGSGNSSSKKVTSSTSSSSSNGSVD) are disordered. The residue at position 216 (Ser216) is a Phosphoserine.

The protein belongs to the VPS26 family. Component of the retromer complex which consists of VPS29, VPS26, VPS35, VPS5 and VPS17. Component of a retromer subcomplex consisting of VPS29, VPS26 and VPS35.

Plays a role in vesicular protein sorting. Required for the endosome-to-Golgi retrieval of the vacuolar protein sorting receptor VPS10. Component of the membrane-associated retromer complex which is essential in endosome-to-Golgi retrograde transport. The VPS29-VPS26-VPS35 subcomplex may be involved in cargo selection. The protein is Carboxypeptidase Y-deficient protein 8 (PEP8) of Saccharomyces cerevisiae (strain ATCC 204508 / S288c) (Baker's yeast).